A 260-amino-acid polypeptide reads, in one-letter code: Imidazole glycerol phosphate synthase subunit HisF (260 aa).

Active-site residues include Asp-12 and Asp-131.

It belongs to the HisA/HisF family. As to quaternary structure, heterodimer of HisH and HisF.

Its subcellular location is the cytoplasm. It catalyses the reaction 5-[(5-phospho-1-deoxy-D-ribulos-1-ylimino)methylamino]-1-(5-phospho-beta-D-ribosyl)imidazole-4-carboxamide + L-glutamine = D-erythro-1-(imidazol-4-yl)glycerol 3-phosphate + 5-amino-1-(5-phospho-beta-D-ribosyl)imidazole-4-carboxamide + L-glutamate + H(+). Its pathway is amino-acid biosynthesis; L-histidine biosynthesis; L-histidine from 5-phospho-alpha-D-ribose 1-diphosphate: step 5/9. IGPS catalyzes the conversion of PRFAR and glutamine to IGP, AICAR and glutamate. The HisF subunit catalyzes the cyclization activity that produces IGP and AICAR from PRFAR using the ammonia provided by the HisH subunit. The chain is Imidazole glycerol phosphate synthase subunit HisF from Corynebacterium jeikeium (strain K411).